A 511-amino-acid polypeptide reads, in one-letter code: GMP synthase [glutamine-hydrolyzing] (511 aa).

In terms of domain architecture, Glutamine amidotransferase type-1 spans 5-195; it reads DILVLDFGSQ…AKYACNCESV (191 aa). C82 serves as the catalytic Nucleophile. Residues H169 and E171 contribute to the active site. The 191-residue stretch at 196–386 folds into the GMPS ATP-PPase domain; that stretch reads WNMGSFAKTQ…LGLSKEVVYR (191 aa). 223–229 provides a ligand contact to ATP; sequence SGGVDSS.

In terms of assembly, homodimer.

It catalyses the reaction XMP + L-glutamine + ATP + H2O = GMP + L-glutamate + AMP + diphosphate + 2 H(+). It functions in the pathway purine metabolism; GMP biosynthesis; GMP from XMP (L-Gln route): step 1/1. Catalyzes the synthesis of GMP from XMP. The sequence is that of GMP synthase [glutamine-hydrolyzing] from Campylobacter jejuni (strain RM1221).